The sequence spans 201 residues: Recombination protein RecR (201 aa).

The C4-type zinc-finger motif lies at 55 to 70 (CVCCGAFCEGRTCALC). A Toprim domain is found at 78 to 173 (GIICVVERAQ…IVTRLASGIP (96 aa)).

It belongs to the RecR family.

Functionally, may play a role in DNA repair. It seems to be involved in an RecBC-independent recombinational process of DNA repair. It may act with RecF and RecO. This chain is Recombination protein RecR, found in Treponema pallidum (strain Nichols).